Consider the following 202-residue polypeptide: LexA repressor 2 (202 aa).

A DNA-binding region (H-T-H motif) is located at residues 28 to 48; sequence LAEISEAFGFASRSVARKHIV. Catalysis depends on for autocatalytic cleavage activity residues Ser123 and Lys160.

This sequence belongs to the peptidase S24 family. As to quaternary structure, homodimer.

The enzyme catalyses Hydrolysis of Ala-|-Gly bond in repressor LexA.. Represses a number of genes involved in the response to DNA damage (SOS response), including recA and lexA. In the presence of single-stranded DNA, RecA interacts with LexA causing an autocatalytic cleavage which disrupts the DNA-binding part of LexA, leading to derepression of the SOS regulon and eventually DNA repair. This is LexA repressor 2 from Pseudomonas syringae pv. tomato (strain ATCC BAA-871 / DC3000).